Here is a 545-residue protein sequence, read N- to C-terminus: Protein BTN1 (545 aa).

Residues 23–49 (AHSSASDPRRTMVTNTSESPLASRQAT) are disordered. Over residues 34–49 (MVTNTSESPLASRQAT) the composition is skewed to polar residues. Helical transmembrane passes span 66–86 (AFFL…TAAL), 97–117 (LVSF…PYFL), 127–147 (VWSC…FPAL), 205–225 (VGWF…AWWV), and 234–254 (GMAI…IILP). The interval 276-304 (TEDDAVERSSSDDQPTTANDDRQDSTIHI) is disordered. A run of 3 helical transmembrane segments spans residues 322-342 (MALL…VYAM), 408-428 (LLWL…TESL), and 440-460 (LVIV…VSVF).

The protein belongs to the battenin family.

Its subcellular location is the vacuole membrane. Involved in vacuolar transport and vacuole pH homeostasis. Also required for cytokinesis. The chain is Protein BTN1 (BTN1) from Mycosarcoma maydis (Corn smut fungus).